The primary structure comprises 456 residues: Signal recognition particle 54 kDa protein (456 aa).

GTP-binding positions include 104-111 (GLYGNGKT), 184-188 (DTSGR), and 242-245 (TKMD).

The protein belongs to the GTP-binding SRP family. SRP54 subfamily. As to quaternary structure, part of the signal recognition particle protein translocation system, which is composed of SRP and FtsY. Archaeal SRP consists of a 7S RNA molecule of 300 nucleotides and two protein subunits: SRP54 and SRP19.

The protein resides in the cytoplasm. It catalyses the reaction GTP + H2O = GDP + phosphate + H(+). In terms of biological role, involved in targeting and insertion of nascent membrane proteins into the cytoplasmic membrane. Binds to the hydrophobic signal sequence of the ribosome-nascent chain (RNC) as it emerges from the ribosomes. The SRP-RNC complex is then targeted to the cytoplasmic membrane where it interacts with the SRP receptor FtsY. The sequence is that of Signal recognition particle 54 kDa protein from Thermoplasma acidophilum (strain ATCC 25905 / DSM 1728 / JCM 9062 / NBRC 15155 / AMRC-C165).